We begin with the raw amino-acid sequence, 249 residues long: MAGHSKFKNIMYRKGAQDKKRSALFSKLSREVTVAAKSGLPDPNANPRLRAAVSAARSGGMPKDNIERAIAKAIGGDGDNYEELRYEGFGPSGVSLIIETLTDNRNRTATNVRTALSKNGGNLGTSGSVTHGFDRMGLITYKAEAGDPDKIFEAALEAGAEDVTSSEDEHEIWTAQADLHEVAGKLEAILGEPEGVKLAWRPQTLINVDEESAGTLLRLIETLEDDDDVQTVWANYDIDDEVMERLGQE.

It belongs to the TACO1 family.

Its subcellular location is the cytoplasm. This is Probable transcriptional regulatory protein ZMO0153 from Zymomonas mobilis subsp. mobilis (strain ATCC 31821 / ZM4 / CP4).